The following is a 302-amino-acid chain: Eukaryotic translation initiation factor 3 subunit F (302 aa).

Residues 23–165 enclose the MPN domain; that stretch reads IVIEPAVLFS…IKTYVSSPVG (143 aa). S162 carries the phosphoserine modification.

The protein belongs to the eIF-3 subunit F family. Component of the eukaryotic translation initiation factor 3 (eIF-3) complex. The eIF-3 complex appears to include tif32/eif3a, SPAC25G10.08/eif3b, tif33/eif3c, SPBC4C3.07/eif3f, tif35/eif3g and sum1/eif3i. This set of common subunits may also associate exclusively with either moe1/eif3d and int6/eif3e, or with SPAC821.05/eif3h and SPAC1751.03/eif3m. The eIF-3 complex may also include SPAC3A12.13c/eif3j.

It is found in the cytoplasm. Component of the eukaryotic translation initiation factor 3 (eIF-3) complex, which is involved in protein synthesis of a specialized repertoire of mRNAs and, together with other initiation factors, stimulates binding of mRNA and methionyl-tRNAi to the 40S ribosome. The eIF-3 complex specifically targets and initiates translation of a subset of mRNAs involved in cell proliferation. This is Eukaryotic translation initiation factor 3 subunit F from Schizosaccharomyces pombe (strain 972 / ATCC 24843) (Fission yeast).